Reading from the N-terminus, the 313-residue chain is Beta-ketoacyl-[acyl-carrier-protein] synthase III (313 aa).

Active-site residues include cysteine 112 and histidine 238. The segment at 239–243 (QANIR) is ACP-binding. The active site involves asparagine 268.

This sequence belongs to the thiolase-like superfamily. FabH family. Homodimer.

The protein localises to the cytoplasm. The enzyme catalyses malonyl-[ACP] + acetyl-CoA + H(+) = 3-oxobutanoyl-[ACP] + CO2 + CoA. The protein operates within lipid metabolism; fatty acid biosynthesis. Its function is as follows. Catalyzes the condensation reaction of fatty acid synthesis by the addition to an acyl acceptor of two carbons from malonyl-ACP. Catalyzes the first condensation reaction which initiates fatty acid synthesis and may therefore play a role in governing the total rate of fatty acid production. Possesses both acetoacetyl-ACP synthase and acetyl transacylase activities. Its substrate specificity determines the biosynthesis of branched-chain and/or straight-chain of fatty acids. This is Beta-ketoacyl-[acyl-carrier-protein] synthase III from Staphylococcus haemolyticus (strain JCSC1435).